The sequence spans 380 residues: Serpin B7 (380 aa).

Phosphoserine is present on residues S217 and S223.

This sequence belongs to the serpin family. Ov-serpin subfamily. As to expression, predominantly expressed in mesangial cells. Expressed in the epidermis of the whole body.

It localises to the cytoplasm. Its function is as follows. Might function as an inhibitor of Lys-specific proteases. Might influence the maturation of megakaryocytes via its action as a serpin. The protein is Serpin B7 (SERPINB7) of Homo sapiens (Human).